A 479-amino-acid polypeptide reads, in one-letter code: Bifunctional protein HldE (479 aa).

The tract at residues 1–319 (MTVILPDFLK…NVVQKYEYTK (319 aa)) is ribokinase. 195–198 (NMSE) contributes to the ATP binding site. Residue D264 is part of the active site. A cytidylyltransferase region spans residues 346 to 479 (MTNGVFDILH…IDTMEINEIN (134 aa)).

This sequence in the N-terminal section; belongs to the carbohydrate kinase PfkB family. It in the C-terminal section; belongs to the cytidylyltransferase family. As to quaternary structure, homodimer.

The enzyme catalyses D-glycero-beta-D-manno-heptose 7-phosphate + ATP = D-glycero-beta-D-manno-heptose 1,7-bisphosphate + ADP + H(+). It catalyses the reaction D-glycero-beta-D-manno-heptose 1-phosphate + ATP + H(+) = ADP-D-glycero-beta-D-manno-heptose + diphosphate. It functions in the pathway nucleotide-sugar biosynthesis; ADP-L-glycero-beta-D-manno-heptose biosynthesis; ADP-L-glycero-beta-D-manno-heptose from D-glycero-beta-D-manno-heptose 7-phosphate: step 1/4. It participates in nucleotide-sugar biosynthesis; ADP-L-glycero-beta-D-manno-heptose biosynthesis; ADP-L-glycero-beta-D-manno-heptose from D-glycero-beta-D-manno-heptose 7-phosphate: step 3/4. Functionally, catalyzes the phosphorylation of D-glycero-D-manno-heptose 7-phosphate at the C-1 position to selectively form D-glycero-beta-D-manno-heptose-1,7-bisphosphate. Catalyzes the ADP transfer from ATP to D-glycero-beta-D-manno-heptose 1-phosphate, yielding ADP-D-glycero-beta-D-manno-heptose. The sequence is that of Bifunctional protein HldE from Blochmanniella floridana.